We begin with the raw amino-acid sequence, 64 residues long: Large ribosomal subunit protein bL33c (64 aa).

It belongs to the bacterial ribosomal protein bL33 family.

It localises to the plastid. The protein resides in the organellar chromatophore. This Paulinella chromatophora protein is Large ribosomal subunit protein bL33c.